We begin with the raw amino-acid sequence, 404 residues long: S-adenosylmethionine synthase (404 aa).

ATP is bound at residue 139–144 (GKGSTD).

Belongs to the AdoMet synthase 2 family. The cofactor is Mg(2+).

The catalysed reaction is L-methionine + ATP + H2O = S-adenosyl-L-methionine + phosphate + diphosphate. It functions in the pathway amino-acid biosynthesis; S-adenosyl-L-methionine biosynthesis; S-adenosyl-L-methionine from L-methionine: step 1/1. Catalyzes the formation of S-adenosylmethionine from methionine and ATP. The sequence is that of S-adenosylmethionine synthase from Saccharolobus islandicus (strain Y.N.15.51 / Yellowstone #2) (Sulfolobus islandicus).